A 369-amino-acid polypeptide reads, in one-letter code: 2-aminoethylphosphonate--pyruvate transaminase (369 aa).

K193 is modified (N6-(pyridoxal phosphate)lysine).

This sequence belongs to the class-V pyridoxal-phosphate-dependent aminotransferase family. PhnW subfamily. Homodimer. Pyridoxal 5'-phosphate serves as cofactor.

It carries out the reaction (2-aminoethyl)phosphonate + pyruvate = phosphonoacetaldehyde + L-alanine. In terms of biological role, involved in phosphonate degradation. The sequence is that of 2-aminoethylphosphonate--pyruvate transaminase from Burkholderia mallei (strain NCTC 10247).